The sequence spans 131 residues: Peptide methionine sulfoxide reductase MsrB (131 aa).

The MsrB domain maps to 8-130 (LEEWKEMLDP…NSVCLDLVPR (123 aa)). Zn(2+) is bound by residues Cys47, Cys50, Cys96, and Cys99. The active-site Nucleophile is Cys119.

Belongs to the MsrB Met sulfoxide reductase family. Zn(2+) serves as cofactor.

It carries out the reaction L-methionyl-[protein] + [thioredoxin]-disulfide + H2O = L-methionyl-(R)-S-oxide-[protein] + [thioredoxin]-dithiol. In Pseudomonas savastanoi pv. phaseolicola (strain 1448A / Race 6) (Pseudomonas syringae pv. phaseolicola (strain 1448A / Race 6)), this protein is Peptide methionine sulfoxide reductase MsrB.